The chain runs to 530 residues: Transcription factor SPT20 homolog (530 aa).

Ser-296 is subject to Phosphoserine. Residues 419–530 (CPVKMSHSSS…PASSSQRHES (112 aa)) are disordered. Composition is skewed to low complexity over residues 424 to 436 (SHSS…LNSG) and 466 to 475 (SSSGNSSSGN). Thr-490 bears the Phosphothreonine mark. Over residues 514–530 (LSPAALSPASSSQRHES) the composition is skewed to low complexity. A phosphoserine mark is found at Ser-515 and Ser-520.

Belongs to the SPT20 family. As to quaternary structure, interacts with ATG9A. Interacts with MAPK14.

Functionally, required for MAP kinase p38 (MAPK11, MAPK12, MAPK13 and/or MAPK14) activation during gastrulation. Required for down-regulation of E-cadherin during gastrulation by regulating E-cadherin protein level downstream from NCK-interacting kinase (NIK) and independently of the regulation of transcription by FGF signaling and Snail. Required for starvation-induced ATG9A trafficking during autophagy. The polypeptide is Transcription factor SPT20 homolog (Supt20h) (Rattus norvegicus (Rat)).